Reading from the N-terminus, the 391-residue chain is Zinc finger protein DPF3 (391 aa).

A compositionally biased stretch (acidic residues) spans 152-165; sequence ENGDGFHDDEDFEV. Disordered stretches follow at residues 152 to 200 and 236 to 266; these read ENGD…PYVC and LAEEEGEEERETEIPQSPPVHHENHKPQKAP. Over residues 169–183 the composition is skewed to basic residues; it reads KRKHRNKGRGRGSGR. Residues 198–235 form a C2H2-type zinc finger; the sequence is YVCDNRYKQKHNSKTADSVCGKRYKNRPGLSYHYAHTH. PHD-type zinc fingers lie at residues 273 to 333 and 330 to 380; these read NDYC…CKSC and CKSC…CQNL.

Component of the BAF complex. Interacts with acetylated histones H3 and H4. Component of neuron-specific chromatin remodeling complex (nBAF complex), a subfamily of ATP-dependent SWI/SNF chromatin remodeling complexes. Expressed in the heart and somites.

It localises to the nucleus. Muscle-specific component of the BAF complex, a multiprotein complex involved in transcriptional activation and repression of select genes by chromatin remodeling (alteration of DNA-nucleosome topology). Specifically binds acetylated lysines on histone 3 and 4. In the complex, it acts as a tissue-specific anchor between histone acetylations and methylations and chromatin remodeling. Belongs to the neuron-specific chromatin remodeling complex (nBAF complex) and may play a role in neural development. Plays an essential role in heart and skeletal muscle development. This Danio rerio (Zebrafish) protein is Zinc finger protein DPF3 (dpf3).